Reading from the N-terminus, the 755-residue chain is Oligopeptide transporter 1 (755 aa).

The next 13 helical transmembrane spans lie at 58–78, 82–102, 134–154, 165–185, 226–246, 298–318, 370–390, 434–454, 462–482, 546–566, 614–634, 664–684, and 697–717; these read TWTL…FFGF, QLWV…KLMA, ITIF…ITIV, AAAM…AGIF, FFII…YLFP, FFAI…VLPI, YLSV…CATI, WWFI…CEGF, WWGL…IGVI, FIVQ…TTWW, GIYP…VPFW, AKAV…YYIF, and ILSA…FFAF.

Belongs to the oligopeptide OPT transporter (TC 2.A.67.1) family. In terms of tissue distribution, highly expressed in flowers, and moderately expressed in leaves and stems.

The protein localises to the membrane. Its function is as follows. Involved in the translocation of tetra- and pentapeptides across the cellular membrane in an energy-dependent manner. In Arabidopsis thaliana (Mouse-ear cress), this protein is Oligopeptide transporter 1 (OPT1).